Here is a 252-residue protein sequence, read N- to C-terminus: dITP/XTP pyrophosphatase (252 aa).

A substrate-binding site is contributed by 7–12; that stretch reads THNEGK. The active-site Proton acceptor is aspartate 74. Aspartate 74 lines the Mg(2+) pocket. Residues serine 75 and 193–196 contribute to the substrate site; that span reads FGYD. The interval 202–229 is disordered; it reads DDQPAGRVSTEPDHEGEPLTSAEMTPAE. Substrate is bound by residues lysine 230 and 235–236; that span reads HR.

Belongs to the HAM1 NTPase family. Homodimer. Requires Mg(2+) as cofactor.

The enzyme catalyses XTP + H2O = XMP + diphosphate + H(+). It carries out the reaction dITP + H2O = dIMP + diphosphate + H(+). It catalyses the reaction ITP + H2O = IMP + diphosphate + H(+). In terms of biological role, pyrophosphatase that catalyzes the hydrolysis of nucleoside triphosphates to their monophosphate derivatives, with a high preference for the non-canonical purine nucleotides XTP (xanthosine triphosphate), dITP (deoxyinosine triphosphate) and ITP. Seems to function as a house-cleaning enzyme that removes non-canonical purine nucleotides from the nucleotide pool, thus preventing their incorporation into DNA/RNA and avoiding chromosomal lesions. The chain is dITP/XTP pyrophosphatase from Bifidobacterium longum (strain DJO10A).